The sequence spans 565 residues: Protein NRT1/ PTR FAMILY 5.15 (565 aa).

2 consecutive transmembrane segments (helical) span residues 49-67 and 80-100; these read FAYF…GPLG and WSGT…AYLG. T104 is modified (phosphothreonine). 10 helical membrane-spanning segments follow: residues 110–130, 142–162, 189–209, 217–237, 331–351, 368–388, 409–429, 454–474, 490–510, and 534–554; these read LIYI…IMGL, SIWV…GQGG, FFNW…IVVA, WAFG…IFLL, IPIW…ITFF, IPAA…VPLY, LQRI…AALV, IWWF…SMVG, IGLS…GFLI, and YFYW…LFIS.

The protein belongs to the major facilitator superfamily. Proton-dependent oligopeptide transporter (POT/PTR) (TC 2.A.17) family. Expressed in shoots, roots and leaves.

It is found in the membrane. This Arabidopsis thaliana (Mouse-ear cress) protein is Protein NRT1/ PTR FAMILY 5.15 (NPF5.15).